The chain runs to 487 residues: Glutamyl-tRNA(Gln) amidotransferase subunit A (487 aa).

Residues Lys79 and Ser158 each act as charge relay system in the active site. Catalysis depends on Ser182, which acts as the Acyl-ester intermediate.

It belongs to the amidase family. GatA subfamily. As to quaternary structure, heterotrimer of A, B and C subunits.

It catalyses the reaction L-glutamyl-tRNA(Gln) + L-glutamine + ATP + H2O = L-glutaminyl-tRNA(Gln) + L-glutamate + ADP + phosphate + H(+). In terms of biological role, allows the formation of correctly charged Gln-tRNA(Gln) through the transamidation of misacylated Glu-tRNA(Gln) in organisms which lack glutaminyl-tRNA synthetase. The reaction takes place in the presence of glutamine and ATP through an activated gamma-phospho-Glu-tRNA(Gln). The protein is Glutamyl-tRNA(Gln) amidotransferase subunit A of Ehrlichia ruminantium (strain Gardel).